The primary structure comprises 177 residues: uncharacterized protein (177 aa).

This is an uncharacterized protein from Azotobacter chroococcum mcd 1.